A 691-amino-acid chain; its full sequence is Elongation factor G (691 aa).

In terms of domain architecture, tr-type G spans 8 to 283 (KKVRNIGIAA…AVVAYLPAPD (276 aa)). GTP-binding positions include 17-24 (AHIDAGKT), 81-85 (DTPGH), and 135-138 (NKMD).

The protein belongs to the TRAFAC class translation factor GTPase superfamily. Classic translation factor GTPase family. EF-G/EF-2 subfamily.

It localises to the cytoplasm. In terms of biological role, catalyzes the GTP-dependent ribosomal translocation step during translation elongation. During this step, the ribosome changes from the pre-translocational (PRE) to the post-translocational (POST) state as the newly formed A-site-bound peptidyl-tRNA and P-site-bound deacylated tRNA move to the P and E sites, respectively. Catalyzes the coordinated movement of the two tRNA molecules, the mRNA and conformational changes in the ribosome. The protein is Elongation factor G of Campylobacter jejuni subsp. doylei (strain ATCC BAA-1458 / RM4099 / 269.97).